The following is a 233-amino-acid chain: Sugar fermentation stimulation protein homolog (233 aa).

The protein belongs to the SfsA family.

This is Sugar fermentation stimulation protein homolog from Rhodospirillum centenum (strain ATCC 51521 / SW).